The following is a 520-amino-acid chain: Ribonuclease Y (520 aa).

Residues 1 to 21 traverse the membrane as a helical segment; the sequence is MEILIIVIAAVVGLALGFAIA. Positions 210 to 295 constitute a KH domain; the sequence is CVSVFNLESD…EVVKKTRKQI (86 aa). Residues 336–429 form the HD domain; the sequence is LLQHSREVAK…VQVCDAISGA (94 aa).

It belongs to the RNase Y family.

It is found in the cell membrane. Endoribonuclease that initiates mRNA decay. The polypeptide is Ribonuclease Y (Christiangramia forsetii (strain DSM 17595 / CGMCC 1.15422 / KT0803) (Gramella forsetii)).